Consider the following 198-residue polypeptide: Small ribosomal subunit protein uS4c (198 aa).

The segment at 17 to 40 (TLPGLTSKRPKNRKDSMNRSSSRK) is disordered. The S4 RNA-binding domain occupies 88 to 154 (MRLDKSFSIG…IKKNIDLFQR (67 aa)).

It belongs to the universal ribosomal protein uS4 family. As to quaternary structure, part of the 30S ribosomal subunit. Contacts protein S5. The interaction surface between S4 and S5 is involved in control of translational fidelity.

The protein localises to the plastid. It is found in the chloroplast. In terms of biological role, one of the primary rRNA binding proteins, it binds directly to 16S rRNA where it nucleates assembly of the body of the 30S subunit. Its function is as follows. With S5 and S12 plays an important role in translational accuracy. This is Small ribosomal subunit protein uS4c (rps4) from Pinus thunbergii (Japanese black pine).